Consider the following 317-residue polypeptide: Phosphopantothenate--cysteine ligase 1 (317 aa).

This sequence belongs to the PPC synthetase family. Homodimer.

The enzyme catalyses (R)-4'-phosphopantothenate + L-cysteine + ATP = N-[(R)-4-phosphopantothenoyl]-L-cysteine + AMP + diphosphate + H(+). It participates in cofactor biosynthesis; coenzyme A biosynthesis; CoA from (R)-pantothenate: step 2/5. In terms of biological role, catalyzes the first step in the biosynthesis of coenzyme A from vitamin B5/pantothenate, where cysteine is conjugated to 4'-phosphopantothenate to form 4-phosphopantothenoylcysteine. The catalytic activity is not CTP- but ATP-dependent. The polypeptide is Phosphopantothenate--cysteine ligase 1 (PPCS1) (Arabidopsis thaliana (Mouse-ear cress)).